A 200-amino-acid chain; its full sequence is NADH-quinone oxidoreductase subunit C (200 aa).

Belongs to the complex I 30 kDa subunit family. NDH-1 is composed of 14 different subunits. Subunits NuoB, C, D, E, F, and G constitute the peripheral sector of the complex.

The protein resides in the cell inner membrane. It catalyses the reaction a quinone + NADH + 5 H(+)(in) = a quinol + NAD(+) + 4 H(+)(out). In terms of biological role, NDH-1 shuttles electrons from NADH, via FMN and iron-sulfur (Fe-S) centers, to quinones in the respiratory chain. The immediate electron acceptor for the enzyme in this species is believed to be ubiquinone. Couples the redox reaction to proton translocation (for every two electrons transferred, four hydrogen ions are translocated across the cytoplasmic membrane), and thus conserves the redox energy in a proton gradient. In Burkholderia cenocepacia (strain HI2424), this protein is NADH-quinone oxidoreductase subunit C.